The primary structure comprises 423 residues: Adenylosuccinate synthetase (423 aa).

Residues 12-18 and 40-42 contribute to the GTP site; these read GDEGKGK and GHT. Catalysis depends on D13, which acts as the Proton acceptor. Mg(2+) contacts are provided by D13 and G40. IMP is bound by residues 13–16, 38–41, T129, R143, Q221, T236, and R300; these read DEGK and NAGH. Catalysis depends on H41, which acts as the Proton donor. Residue 296-302 participates in substrate binding; sequence AVTGRKR. GTP-binding positions include R302, 328–330, and 408–410; these read KSD and SVG.

Belongs to the adenylosuccinate synthetase family. As to quaternary structure, homodimer. The cofactor is Mg(2+).

The protein resides in the cytoplasm. The enzyme catalyses IMP + L-aspartate + GTP = N(6)-(1,2-dicarboxyethyl)-AMP + GDP + phosphate + 2 H(+). The protein operates within purine metabolism; AMP biosynthesis via de novo pathway; AMP from IMP: step 1/2. Plays an important role in the de novo pathway of purine nucleotide biosynthesis. Catalyzes the first committed step in the biosynthesis of AMP from IMP. This chain is Adenylosuccinate synthetase, found in Parabacteroides distasonis (strain ATCC 8503 / DSM 20701 / CIP 104284 / JCM 5825 / NCTC 11152).